The sequence spans 79 residues: D-alanyl carrier protein (79 aa).

Residues 1 to 77 (MDIKSEVLKI…KIIEGITELR (77 aa)) form the Carrier domain. An O-(pantetheine 4'-phosphoryl)serine modification is found at Ser-35.

Belongs to the DltC family. Post-translationally, 4'-phosphopantetheine is transferred from CoA to a specific serine of apo-DCP.

Its subcellular location is the cytoplasm. The protein operates within cell wall biogenesis; lipoteichoic acid biosynthesis. Functionally, carrier protein involved in the D-alanylation of lipoteichoic acid (LTA). The loading of thioester-linked D-alanine onto DltC is catalyzed by D-alanine--D-alanyl carrier protein ligase DltA. The DltC-carried D-alanyl group is further transferred to cell membrane phosphatidylglycerol (PG) by forming an ester bond, probably catalyzed by DltD. D-alanylation of LTA plays an important role in modulating the properties of the cell wall in Gram-positive bacteria, influencing the net charge of the cell wall. The sequence is that of D-alanyl carrier protein from Streptococcus mutans serotype c (strain ATCC 700610 / UA159).